The following is a 498-amino-acid chain: Trehalose-6-phosphate synthase (498 aa).

Arg-28 provides a ligand contact to D-glucose 6-phosphate. Gly-48–Gly-49 is a UDP-alpha-D-glucose binding site. Residues Tyr-106 and Asp-160 each coordinate D-glucose 6-phosphate. The UDP-alpha-D-glucose site is built by Arg-302 and Lys-307. Residue Arg-340 coordinates D-glucose 6-phosphate. Leu-405–Glu-409 is a UDP-alpha-D-glucose binding site.

Belongs to the glycosyltransferase 20 family. As to quaternary structure, homotetramer.

The catalysed reaction is ADP-alpha-D-glucose + D-glucose 6-phosphate = alpha,alpha-trehalose 6-phosphate + ADP + H(+). The enzyme catalyses CDP-alpha-D-glucose + D-glucose 6-phosphate = alpha,alpha-trehalose 6-phosphate + CDP + H(+). It catalyses the reaction GDP-alpha-D-glucose + D-glucose 6-phosphate = alpha,alpha-trehalose 6-phosphate + GDP + H(+). It carries out the reaction TDP-alpha-D-glucose + D-glucose 6-phosphate = 5-methyl-UDP + alpha,alpha-trehalose 6-phosphate + H(+). The catalysed reaction is D-glucose 6-phosphate + UDP-alpha-D-glucose = alpha,alpha-trehalose 6-phosphate + UDP + H(+). Its pathway is glycan biosynthesis; trehalose biosynthesis. In terms of biological role, probably involved in the osmoprotection via the biosynthesis of trehalose and in the production of glycogen and alpha-glucan via the TreS-Pep2 branch involved in the biosynthesis of maltose-1-phosphate (M1P). Catalyzes the transfer of glucose from UDP-glucose (UDP-Glc) to D-glucose 6-phosphate (Glc-6-P) to form trehalose-6-phosphate. Probably also able to use ADP-Glc, CDP-Glc, GDP-Glc and TDP-Glc as glucosyl donors. The protein is Trehalose-6-phosphate synthase of Mycobacterium leprae (strain TN).